Here is a 393-residue protein sequence, read N- to C-terminus: Zinc finger CCHC domain-containing protein 18 (393 aa).

Disordered regions lie at residues 281–300 (VEPEDPPLSSPGASSLRGTA) and 313–341 (DDFDEESPSTSSGSGQRNNGPGDLGRTRK). Polar residues-rich tracts occupy residues 291–300 (PGASSLRGTA) and 320–331 (PSTSSGSGQRNN). The segment at 346–363 (IRCPHCGEEGHAKETCDN) adopts a CCHC-type zinc-finger fold.

Belongs to the ZCCHC12 family.

The chain is Zinc finger CCHC domain-containing protein 18 from Mus musculus (Mouse).